The sequence spans 193 residues: dCTP deaminase (193 aa).

DCTP contacts are provided by residues 110–115 (RSSLAR), Asp-128, 136–138 (VLE), Tyr-171, Lys-178, and Gln-182. Glu-138 serves as the catalytic Proton donor/acceptor. Residues 169–193 (RPYNSRQDAKYKGQQGAVASRIDKD) form a disordered region.

Belongs to the dCTP deaminase family. As to quaternary structure, homotrimer.

The enzyme catalyses dCTP + H2O + H(+) = dUTP + NH4(+). It functions in the pathway pyrimidine metabolism; dUMP biosynthesis; dUMP from dCTP (dUTP route): step 1/2. In terms of biological role, catalyzes the deamination of dCTP to dUTP. The sequence is that of dCTP deaminase from Erwinia tasmaniensis (strain DSM 17950 / CFBP 7177 / CIP 109463 / NCPPB 4357 / Et1/99).